Here is a 139-residue protein sequence, read N- to C-terminus: 2S seed storage albumin protein (139 aa).

The first 15 residues, 1 to 15 (AALLVALLFVANAAA), serve as a signal peptide directing secretion. IgE-binding stretches follow at residues 16 to 30 (FRTTITTMEIDEDID), 29 to 34 (IDNPRR), 64 to 78 (GYDEDNQRQHFRQCC), 65 to 73 (YDEDNQRQH), 95 to 103 (QVVRRQQQQ), 99 to 111 (RQQQQQGLRGEEM), 102 to 114 (QQQGLRGEEMEEM), 105 to 117 (GLRGEEMEEMVQS), 112 to 126 (EEMVQSARDLPNECG), 125 to 136 (CGISSQRCEIRR), and 125 to 139 (CGISSQRCEIRRSWF). 2 consecutive propeptides follow at residues 16–31 (FRTTITTMEIDEDIDN) and 58–71 (QQSRSGGYDEDNQR). 4 disulfides stabilise this stretch: cysteine 39–cysteine 88, cysteine 52–cysteine 77, cysteine 78–cysteine 125, and cysteine 90–cysteine 132. Positions 104–115 (QGLRGEEMEEMV) are immunodominant epitope. IgE-binding; binds to IgE in 75% of the 20 walnut-allergic patients tested. Residues 107 to 110 (RGEE) form a minimally required for IgE-binding by the immunodominant epitope region. A propeptide spanning residues 136 to 139 (RSWF) is cleaved from the precursor.

It belongs to the 2S seed storage albumins family. As to quaternary structure, the mature protein consists of a small chain and a large chain linked by disulfide bonds. As to expression, expressed in seed (at protein level). Expressed in the peel of mature seed.

Its function is as follows. Seed storage protein. This Juglans regia (English walnut) protein is 2S seed storage albumin protein.